The chain runs to 400 residues: Enoyl-[acyl-carrier-protein] reductase [NADH] (400 aa).

NAD(+)-binding positions include 48-53, 74-75, 111-112, and 139-140; these read GASTGY, FE, DA, and LA. Tyrosine 225 is a substrate binding site. Tyrosine 235 serves as the catalytic Proton donor. NAD(+) contacts are provided by residues lysine 244 and 273 to 275; that span reads VVT.

Belongs to the TER reductase family. As to quaternary structure, monomer.

It catalyses the reaction a 2,3-saturated acyl-[ACP] + NAD(+) = a (2E)-enoyl-[ACP] + NADH + H(+). It participates in lipid metabolism; fatty acid biosynthesis. Involved in the final reduction of the elongation cycle of fatty acid synthesis (FAS II). Catalyzes the reduction of a carbon-carbon double bond in an enoyl moiety that is covalently linked to an acyl carrier protein (ACP). The sequence is that of Enoyl-[acyl-carrier-protein] reductase [NADH] from Burkholderia lata (strain ATCC 17760 / DSM 23089 / LMG 22485 / NCIMB 9086 / R18194 / 383).